The chain runs to 185 residues: Ribose 1,5-bisphosphate phosphokinase PhnN (185 aa).

ATP is bound at residue 10–17 (GPSGSGKD).

The protein belongs to the ribose 1,5-bisphosphokinase family.

It carries out the reaction alpha-D-ribose 1,5-bisphosphate + ATP = 5-phospho-alpha-D-ribose 1-diphosphate + ADP. It functions in the pathway metabolic intermediate biosynthesis; 5-phospho-alpha-D-ribose 1-diphosphate biosynthesis; 5-phospho-alpha-D-ribose 1-diphosphate from D-ribose 5-phosphate (route II): step 3/3. Its function is as follows. Catalyzes the phosphorylation of ribose 1,5-bisphosphate to 5-phospho-D-ribosyl alpha-1-diphosphate (PRPP). The sequence is that of Ribose 1,5-bisphosphate phosphokinase PhnN from Shigella dysenteriae serotype 1 (strain Sd197).